A 232-amino-acid chain; its full sequence is Dehydrogenase OXI1 (232 aa).

Residues 1–20 (MTETFKVAITFVSPSSEALA) form the signal peptide. Leucine 19 lines the NADP(+) pocket. An N-linked (GlcNAc...) asparagine glycan is attached at asparagine 28. NADP(+) is bound by residues aspartate 42, asparagine 70, and lysine 103. A glycan (N-linked (GlcNAc...) asparagine) is linked at asparagine 117. Residues serine 119 and serine 121 each act as proton donor in the active site. The NADP(+) site is built by tyrosine 133, lysine 137, and threonine 168. Residue tyrosine 133 is the Proton acceptor of the active site. Lysine 137 serves as the catalytic Lowers pKa of active site Tyr.

The protein belongs to the short-chain dehydrogenases/reductases (SDR) family.

It carries out the reaction a primary alcohol + NAD(+) = an aldehyde + NADH + H(+). The catalysed reaction is a secondary alcohol + NAD(+) = a ketone + NADH + H(+). It participates in mycotoxin biosynthesis. Its function is as follows. Dehydrogenase; part of the Tox1A locus, one of the 2 loci that mediate the biosynthesis of T-toxin, a family of linear polyketides 37 to 45 carbons in length, of which the major component is 41 carbons, and which leads to high virulence to maize. One of the PKSs (PKS1 or PKS2) could synthesize a precursor, used subsequently by the other PKS as starter unit, to add additional carbons. Variability in the length of the final carbon backbone C35-47 could be achieved by varying the number of condensation cycles, or use of different starter or extender units or might be due to decarboxylation of the penultimate product, catalyzed by DEC1. Additional proteins are required for the biosynthesis of T-toxin, including oxidoreductases RED1, RED2, RED3, LAM1 and OXI1, as well as esterase TOX9. The polypeptide is Dehydrogenase OXI1 (Cochliobolus heterostrophus (strain C4 / ATCC 48331 / race T) (Southern corn leaf blight fungus)).